The sequence spans 57 residues: Large ribosomal subunit protein bL32 (57 aa).

A disordered region spans residues 1-20; sequence MAVQQRRSSKHRRDKRRSHD. Positions 7-18 are enriched in basic residues; it reads RSSKHRRDKRRS.

It belongs to the bacterial ribosomal protein bL32 family.

The chain is Large ribosomal subunit protein bL32 (rpmF) from Mycoplasma genitalium (strain ATCC 33530 / DSM 19775 / NCTC 10195 / G37) (Mycoplasmoides genitalium).